A 138-amino-acid chain; its full sequence is ATP synthase epsilon chain (138 aa).

A compositionally biased stretch (basic and acidic residues) spans lysine 89–lysine 114. The segment at lysine 89–glutamine 117 is disordered.

This sequence belongs to the ATPase epsilon chain family. F-type ATPases have 2 components, CF(1) - the catalytic core - and CF(0) - the membrane proton channel. CF(1) has five subunits: alpha(3), beta(3), gamma(1), delta(1), epsilon(1). CF(0) has three main subunits: a, b and c.

It is found in the cellular thylakoid membrane. Produces ATP from ADP in the presence of a proton gradient across the membrane. The sequence is that of ATP synthase epsilon chain from Gloeothece citriformis (strain PCC 7424) (Cyanothece sp. (strain PCC 7424)).